The primary structure comprises 455 residues: Kynurenine 3-monooxygenase (455 aa).

The protein belongs to the aromatic-ring hydroxylase family. KMO subfamily. FAD serves as cofactor.

It carries out the reaction L-kynurenine + NADPH + O2 + H(+) = 3-hydroxy-L-kynurenine + NADP(+) + H2O. Its pathway is cofactor biosynthesis; NAD(+) biosynthesis; quinolinate from L-kynurenine: step 1/3. Its function is as follows. Catalyzes the hydroxylation of L-kynurenine (L-Kyn) to form 3-hydroxy-L-kynurenine (L-3OHKyn). Required for synthesis of quinolinic acid. The polypeptide is Kynurenine 3-monooxygenase (Xanthomonas axonopodis pv. citri (strain 306)).